Here is a 1320-residue protein sequence, read N- to C-terminus: Clustered mitochondria protein homolog (1320 aa).

Disordered stretches follow at residues 166–241 (QQLE…KQKM), 552–582 (YGSM…TKSI), and 683–708 (LKEK…EDVQ). Residues 185 to 194 (TEDKEEKETI) are compositionally biased toward basic and acidic residues. Residues 202–213 (KKNKHHNKKGNK) are compositionally biased toward basic residues. Basic and acidic residues-rich tracts occupy residues 226 to 241 (NEEK…KQKM), 565 to 575 (QQQKEENEENK), and 683 to 695 (LKEK…KEGI). The Clu domain occupies 379-649 (KTNRYDINKG…KATPRDPNYT (271 aa)). TPR repeat units lie at residues 955–988 (GLDL…YHQV), 997–1030 (GACF…TEKT), 1039–1072 (VQAY…TDLL), 1081–1114 (ASIY…QEFL), and 1123–1156 (STTY…LEKE). Residues 1204-1320 (KADQFKKSQP…SKPNKKSSKN (117 aa)) form a disordered region. The segment covering 1237–1247 (KPKKSQSKKSK) has biased composition (basic residues). Over residues 1248-1311 (STNTTTTTNT…PTSSSAADSS (64 aa)) the composition is skewed to low complexity.

Belongs to the CLU family.

The protein localises to the cytoplasm. In terms of biological role, mRNA-binding protein involved in proper cytoplasmic distribution of mitochondria. This is Clustered mitochondria protein homolog from Dictyostelium discoideum (Social amoeba).